The primary structure comprises 1202 residues: Caskin-2 (1202 aa).

ANK repeat units follow at residues 48–77 (DGFS…TVDI), 81–110 (NGMR…AVNA), 114–143 (DGQI…NPCL), 147–176 (AKKT…CVAL), 188–217 (NYTT…EINR), and 220–249 (KTGT…DVNI). Residue Y253 is modified to Phosphotyrosine. Residues 281-347 (SGILKVRALK…PPGIVEVVSK (67 aa)) form the SH3 domain. Residues 355-460 (RLPSAPTPLR…GLHPPSLADN (106 aa)) are disordered. 6 positions are modified to phosphoserine: S358, S393, S396, S403, S406, and S409. A compositionally biased stretch (polar residues) spans 415–425 (SAGSGQSSEGT). At S471 the chain carries Phosphoserine. 2 consecutive SAM domains span residues 489–552 (KDAQ…LSIA) and 558–622 (YIPT…LAEL). Disordered stretches follow at residues 676 to 1104 (LQAA…APKP) and 1116 to 1181 (GPKL…STKH). Residue S725 is modified to Phosphoserine. The span at 731–740 (NLPEGTERPP) shows a compositional bias: basic and acidic residues. Pro residues predominate over residues 765–774 (SPAPGPPPGA). A phosphoserine mark is found at S858, S877, S878, and S892. Over residues 913–923 (PSEPPGPPAPA) the composition is skewed to pro residues. A compositionally biased stretch (low complexity) spans 940–949 (PPSRGSSGEG). Pro residues-rich tracts occupy residues 966–978 (PAGP…PVPP) and 1018–1030 (PAAP…PGES). Low complexity predominate over residues 1031–1051 (PPASSLPQPEPSSLPAQGVPT). Composition is skewed to pro residues over residues 1052-1068 (PLAP…PCPG) and 1124-1133 (GPRPVPPPRP). Polar residues predominate over residues 1135 to 1151 (STGTVGPGQAQQRLEQT). Residues 1161–1172 (AAEKSIGTKEQE) are compositionally biased toward basic and acidic residues.

May not bind CASK.

It is found in the cytoplasm. The protein is Caskin-2 (CASKIN2) of Homo sapiens (Human).